A 111-amino-acid chain; its full sequence is ATP-dependent Clp protease adapter protein ClpS (111 aa).

The protein belongs to the ClpS family. In terms of assembly, binds to the N-terminal domain of the chaperone ClpA.

Its function is as follows. Involved in the modulation of the specificity of the ClpAP-mediated ATP-dependent protein degradation. The sequence is that of ATP-dependent Clp protease adapter protein ClpS from Legionella pneumophila (strain Paris).